The following is a 372-amino-acid chain: Putative glutamate--cysteine ligase 2 (372 aa).

It belongs to the glutamate--cysteine ligase type 2 family. YbdK subfamily. As to quaternary structure, homodimer.

It carries out the reaction L-cysteine + L-glutamate + ATP = gamma-L-glutamyl-L-cysteine + ADP + phosphate + H(+). Its function is as follows. ATP-dependent carboxylate-amine ligase which exhibits weak glutamate--cysteine ligase activity. This chain is Putative glutamate--cysteine ligase 2 (ybdK), found in Escherichia coli O81 (strain ED1a).